The sequence spans 311 residues: Linearmycin resistance ATP-binding protein LnrL (311 aa).

An ABC transporter domain is found at 2–232 (LQAENIKKAY…LGGDTIIQLT (231 aa)). 34–41 (GPNGAGKS) lines the ATP pocket.

The protein belongs to the ABC transporter superfamily. As to quaternary structure, the complex is composed of two ATP-binding proteins (LnrL) and two transmembrane proteins (LnrM and LnrN).

Functionally, required for resistance to linearmycins, a family of antibiotic-specialized metabolites produced by some streptomycetes. Part of the ABC transporter complex LnrLMN that probably facilitates linearmycin removal from the membrane. Responsible for energy coupling to the transport system. Also mediates KinC-dependent biofilm morphology. The sequence is that of Linearmycin resistance ATP-binding protein LnrL from Bacillus subtilis (strain 168).